The sequence spans 255 residues: Geranylgeranylglyceryl phosphate synthase (255 aa).

The Mg(2+) site is built by Asp26 and Ser55. Sn-glycerol 1-phosphate-binding positions include 174-180, 205-206, and 227-228; these read YLEAGSG, GG, and GT.

It belongs to the GGGP/HepGP synthase family. Group II subfamily. It depends on Mg(2+) as a cofactor.

The protein localises to the cytoplasm. It carries out the reaction sn-glycerol 1-phosphate + (2E,6E,10E)-geranylgeranyl diphosphate = sn-3-O-(geranylgeranyl)glycerol 1-phosphate + diphosphate. It participates in membrane lipid metabolism; glycerophospholipid metabolism. In terms of biological role, prenyltransferase that catalyzes the transfer of the geranylgeranyl moiety of geranylgeranyl diphosphate (GGPP) to the C3 hydroxyl of sn-glycerol-1-phosphate (G1P). This reaction is the first ether-bond-formation step in the biosynthesis of archaeal membrane lipids. This is Geranylgeranylglyceryl phosphate synthase from Thermococcus sibiricus (strain DSM 12597 / MM 739).